The chain runs to 256 residues: Major prion protein (256 aa).

The first 24 residues, 1-24 (MVKSHIGSWILVLFVAMWSDVGLC), serve as a signal peptide directing secretion. Residues 25–233 (KKRPKPGGGW…ESQAYYQRGA (209 aa)) form an interaction with GRB2, ERI3 and SYN1 region. The segment at 28–110 (PKPGGGWNTG…QWNKPSKPKT (83 aa)) is disordered. Tandem repeats lie at residues 54–62 (PQGGGGWGQ), 63–70 (PHGGGWGQ), 71–78 (PHGGGWGQ), 79–86 (PHGGGWGQ), and 87–95 (PHGGGGWGQ). A 5 X 8 AA tandem repeats of P-H-G-G-G-W-G-Q region spans residues 54–95 (PQGGGGWGQPHGGGWGQPHGGGWGQPHGGGWGQPHGGGGWGQ). A compositionally biased stretch (gly residues) spans 55-97 (QGGGGWGQPHGGGWGQPHGGGWGQPHGGGWGQPHGGGGWGQGG). Positions 64, 65, 66, 72, 73, 74, 80, 81, 82, 88, 90, and 91 each coordinate Cu(2+). Cys-182 and Cys-217 are oxidised to a cystine. N-linked (GlcNAc...) (complex) asparagine glycans are attached at residues Asn-184 and Asn-200. A lipid anchor (GPI-anchor amidated alanine) is attached at Ala-233. The propeptide at 234–256 (SVILFSSPPVILLISFLIFLIVG) is removed in mature form.

The protein belongs to the prion family. As to quaternary structure, monomer and homodimer. Has a tendency to aggregate into amyloid fibrils containing a cross-beta spine, formed by a steric zipper of superposed beta-strands. Soluble oligomers may represent an intermediate stage on the path to fibril formation. Copper binding may promote oligomerization. Interacts with GRB2, APP, ERI3/PRNPIP and SYN1. Mislocalized cytosolically exposed PrP interacts with MGRN1; this interaction alters MGRN1 subcellular location and causes lysosomal enlargement. Interacts with KIAA1191.

It is found in the cell membrane. Its subcellular location is the golgi apparatus. Functionally, its primary physiological function is unclear. Has cytoprotective activity against internal or environmental stresses. May play a role in neuronal development and synaptic plasticity. May be required for neuronal myelin sheath maintenance. May play a role in iron uptake and iron homeostasis. Soluble oligomers are toxic to cultured neuroblastoma cells and induce apoptosis (in vitro). Association with GPC1 (via its heparan sulfate chains) targets PRNP to lipid rafts. Also provides Cu(2+) or Zn(2+) for the ascorbate-mediated GPC1 deaminase degradation of its heparan sulfate side chains. The sequence is that of Major prion protein (PRNP) from Ovis aries (Sheep).